We begin with the raw amino-acid sequence, 180 residues long: Translation machinery-associated protein 16 homolog (180 aa).

Residues 1–12 (MTNLRKELEKCK) show a composition bias toward basic and acidic residues. A disordered region spans residues 1 to 32 (MTNLRKELEKCKHPNSRKTKALGKKARRQNNK). Residues 13-32 (HPNSRKTKALGKKARRQNNK) show a composition bias toward basic residues.

This sequence belongs to the TMA16 family.

This is Translation machinery-associated protein 16 homolog from Drosophila melanogaster (Fruit fly).